The following is a 445-amino-acid chain: MSNRKYFGTDGIRGRVGDAPITPDFVLKLGWAAGKVLARHGSRKIIISKDTRISGYMLESALEAGLAAAGLSALFTGPMPTPAVAYLTRTFRAEAGIVISASHNPFYDNGIKFFSIDGTKLPDAVEEAIEAEMEKEISCVDSAELGKASRIVDAAGRYIEFCKATFPNELSLSELKIVVDCANGATYHIAPNVLRELGANVIAIGCEPNGVNINAEVGATDVRALQARVLAEKADLGIAFDGDGDRVIMVDHEGNKVDGDQIMYIIAREGLRQGQLRGGAVGTLMSNMGLELALKQLGIPFARAKVGDRYVLEKMQEKGWRIGAENSGHVILLDKTTTGDGIVAGLQVLAAMARNHMSLHDLCSGMKMFPQILVNVRYTAGSGDPLEHESVKAVTAEVEAALGNRGRVLLRKSGTEPLIRVMVEGEDEAQVTEFAHRIADAVKAV.

S102 acts as the Phosphoserine intermediate in catalysis. Residues S102, D241, D243, and D245 each coordinate Mg(2+). At S102 the chain carries Phosphoserine.

This sequence belongs to the phosphohexose mutase family. It depends on Mg(2+) as a cofactor. In terms of processing, activated by phosphorylation.

The catalysed reaction is alpha-D-glucosamine 1-phosphate = D-glucosamine 6-phosphate. Its function is as follows. Catalyzes the conversion of glucosamine-6-phosphate to glucosamine-1-phosphate. The chain is Phosphoglucosamine mutase from Shigella boydii serotype 4 (strain Sb227).